The following is a 136-amino-acid chain: Large ribosomal subunit protein uL22 (136 aa).

This sequence belongs to the universal ribosomal protein uL22 family. In terms of assembly, part of the 50S ribosomal subunit.

Its function is as follows. This protein binds specifically to 23S rRNA; its binding is stimulated by other ribosomal proteins, e.g. L4, L17, and L20. It is important during the early stages of 50S assembly. It makes multiple contacts with different domains of the 23S rRNA in the assembled 50S subunit and ribosome. Functionally, the globular domain of the protein is located near the polypeptide exit tunnel on the outside of the subunit, while an extended beta-hairpin is found that lines the wall of the exit tunnel in the center of the 70S ribosome. The chain is Large ribosomal subunit protein uL22 from Bacteroides fragilis (strain ATCC 25285 / DSM 2151 / CCUG 4856 / JCM 11019 / LMG 10263 / NCTC 9343 / Onslow / VPI 2553 / EN-2).